The chain runs to 283 residues: Phosphate import ATP-binding protein PstB (283 aa).

Residues 1–20 are compositionally biased toward polar residues; it reads MAQTLAQTKQISQSHTFDVS. The disordered stretch occupies residues 1 to 32; sequence MAQTLAQTKQISQSHTFDVSQSHHKTPDDTNS. Residues 37-278 form the ABC transporter domain; the sequence is YSTQNLDLWY…PSNKKTEDYI (242 aa). 69–76 provides a ligand contact to ATP; that stretch reads GPSGCGKS.

The protein belongs to the ABC transporter superfamily. Phosphate importer (TC 3.A.1.7) family. In terms of assembly, the complex is composed of two ATP-binding proteins (PstB), two transmembrane proteins (PstC and PstA) and a solute-binding protein (PstS).

It is found in the cell membrane. It carries out the reaction phosphate(out) + ATP + H2O = ADP + 2 phosphate(in) + H(+). In terms of biological role, part of the ABC transporter complex PstSACB involved in phosphate import. Responsible for energy coupling to the transport system. The sequence is that of Phosphate import ATP-binding protein PstB from Staphylococcus aureus (strain MRSA252).